Here is a 322-residue protein sequence, read N- to C-terminus: Serine protease Lpg1137 (322 aa).

S68 is an active-site residue.

The protein resides in the secreted. The protein localises to the host mitochondrion membrane. Functionally, serine protease effector that inhibits host cell autophagy by targeting SNX17. Localizes to the host endoplasmic reticulum-mitochondria contact site and catalyzes degradation of host SNX17, thereby impairing endoplasmic reticulum-mitochondria communication, leading to inhibit autophagy as well as staurosporine-induced apoptosis. The protein is Serine protease Lpg1137 of Legionella pneumophila subsp. pneumophila (strain Philadelphia 1 / ATCC 33152 / DSM 7513).